Consider the following 265-residue polypeptide: Homeobox protein engrailed-2-B (265 aa).

2 stretches are compositionally biased toward basic and acidic residues: residues 1-12 (MEENEQNNREVE) and 102-115 (GEKK…ETLK). 3 disordered regions span residues 1-38 (MEEN…QPHH), 60-138 (INHQ…SSKA), and 156-182 (DRPS…PRTA). The span at 122 to 136 (DHSLSSDSDSSQASS) shows a compositional bias: low complexity. Positions 176–235 (DKRPRTAFTAEQLQRLKAEFQTNRYLTEQRRQSLAQELGLNESQIKIWFQNKRAKIKKST) form a DNA-binding region, homeobox.

The protein belongs to the engrailed homeobox family.

It localises to the nucleus. This is Homeobox protein engrailed-2-B (en2-b) from Xenopus laevis (African clawed frog).